A 129-amino-acid chain; its full sequence is Glycophorin-A (129 aa).

An N-terminal signal peptide occupies residues 1 to 17 (MYEKIVIVLLLSGYIST). Gln18 bears the Pyrrolidone carboxylic acid mark. Residues 18–82 (QDVTEIIPHE…QLVHIFSEPV (65 aa)) are Extracellular-facing. 2 O-linked (GalNAc...) serine glycosylation sites follow: Ser29 and Ser30. The O-linked (GalNAc...) threonine glycan is linked to Thr34. Residue Ser40 is glycosylated (O-linked (GalNAc...) serine). O-linked (GalNAc...) threonine glycosylation is found at Thr41 and Thr48. An O-linked (GalNAc...) serine glycan is attached at Ser56. The helical transmembrane segment at 83-103 (IIGIIYAVMLGIIITILSIAF) threads the bilayer. Over 104–129 (CIGQLTKKSSLPAQVASPEDVDPEVL) the chain is Cytoplasmic.

This sequence belongs to the glycophorin-A family. In terms of assembly, homodimer. Component of the ankyrin-1 complex in the erythrocyte, composed of ANK1, RHCE, RHAG, SLC4A1, EPB42, GYPA, GYPB and AQP1. Interacts with SLC4A1; a GYPA monomer is bound at each end of the SLC4A1 dimer forming a heterotetramer.

Its subcellular location is the membrane. Component of the ankyrin-1 complex, a multiprotein complex involved in the stability and shape of the erythrocyte membrane. Glycophorin A is the major intrinsic membrane protein of the erythrocyte. The N-terminal glycosylated segment, which lies outside the erythrocyte membrane, has MN blood group receptors. Appears to be important for the function of SLC4A1 and is required for high activity of SLC4A1. May be involved in translocation of SLC4A1 to the plasma membrane. The polypeptide is Glycophorin-A (Canis lupus familiaris (Dog)).